The sequence spans 346 residues: Methylthioribose-1-phosphate isomerase (346 aa).

Residues 48–50, Arg-88, and Gln-192 contribute to the substrate site; that span reads RGA. The active-site Proton donor is Asp-233. Residue 243–244 coordinates substrate; it reads NK.

The protein belongs to the eIF-2B alpha/beta/delta subunits family. MtnA subfamily.

The catalysed reaction is 5-(methylsulfanyl)-alpha-D-ribose 1-phosphate = 5-(methylsulfanyl)-D-ribulose 1-phosphate. Its pathway is amino-acid biosynthesis; L-methionine biosynthesis via salvage pathway; L-methionine from S-methyl-5-thio-alpha-D-ribose 1-phosphate: step 1/6. Functionally, catalyzes the interconversion of methylthioribose-1-phosphate (MTR-1-P) into methylthioribulose-1-phosphate (MTRu-1-P). This is Methylthioribose-1-phosphate isomerase from Alcanivorax borkumensis (strain ATCC 700651 / DSM 11573 / NCIMB 13689 / SK2).